Here is a 147-residue protein sequence, read N- to C-terminus: NADH-quinone oxidoreductase subunit A (147 aa).

The next 3 membrane-spanning stretches (helical) occupy residues 13–33 (LFSYAVAIVVLLAAMLGLGAV), 70–90 (YLVAMLFVIFDVESVFLFSWA), and 104–124 (VVVFVASLAAALAYVWRWGAL).

Belongs to the complex I subunit 3 family. As to quaternary structure, NDH-1 is composed of 14 different subunits. Subunits NuoA, H, J, K, L, M, N constitute the membrane sector of the complex.

Its subcellular location is the cell inner membrane. The enzyme catalyses a quinone + NADH + 5 H(+)(in) = a quinol + NAD(+) + 4 H(+)(out). Functionally, NDH-1 shuttles electrons from NADH, via FMN and iron-sulfur (Fe-S) centers, to quinones in the respiratory chain. The immediate electron acceptor for the enzyme in this species is believed to be ubiquinone. Couples the redox reaction to proton translocation (for every two electrons transferred, four hydrogen ions are translocated across the cytoplasmic membrane), and thus conserves the redox energy in a proton gradient. This is NADH-quinone oxidoreductase subunit A from Gluconacetobacter diazotrophicus (strain ATCC 49037 / DSM 5601 / CCUG 37298 / CIP 103539 / LMG 7603 / PAl5).